Consider the following 251-residue polypeptide: 4-hydroxy-tetrahydrodipicolinate reductase (251 aa).

Residues 8–13 (GAKGRM), 76–78 (GTT), and 106–109 (APNF) contribute to the NAD(+) site. The active-site Proton donor/acceptor is the His-136. His-137 provides a ligand contact to (S)-2,3,4,5-tetrahydrodipicolinate. Lys-140 serves as the catalytic Proton donor. Position 146–147 (146–147 (GT)) interacts with (S)-2,3,4,5-tetrahydrodipicolinate.

It belongs to the DapB family.

It is found in the cytoplasm. The catalysed reaction is (S)-2,3,4,5-tetrahydrodipicolinate + NAD(+) + H2O = (2S,4S)-4-hydroxy-2,3,4,5-tetrahydrodipicolinate + NADH + H(+). It catalyses the reaction (S)-2,3,4,5-tetrahydrodipicolinate + NADP(+) + H2O = (2S,4S)-4-hydroxy-2,3,4,5-tetrahydrodipicolinate + NADPH + H(+). It participates in amino-acid biosynthesis; L-lysine biosynthesis via DAP pathway; (S)-tetrahydrodipicolinate from L-aspartate: step 4/4. Catalyzes the conversion of 4-hydroxy-tetrahydrodipicolinate (HTPA) to tetrahydrodipicolinate. In Bifidobacterium longum subsp. infantis (strain ATCC 15697 / DSM 20088 / JCM 1222 / NCTC 11817 / S12), this protein is 4-hydroxy-tetrahydrodipicolinate reductase.